The sequence spans 228 residues: uncharacterized protein (228 aa).

The interval 1 to 34 is disordered; it reads MPRDTKPYSRPANAPRPGVKTERSNQFKAASTKY.

This is an uncharacterized protein from Orgyia pseudotsugata (Douglas-fir tussock moth).